The chain runs to 270 residues: MGLSPAASGEFGIRLSRVPWPRPTQISKTSSTESSDTQSATGQSTVPHSDSASSQALLVQFLPKQLKQDRRLEQARSFQQGEKPETSLELTPSKKRTELIPTSNSEIESTQKNQAVEGNPRPRPGDLIEIFRIGYEHWAIYVEDDCVVHLAPPSEFEAGSITSIFSNRAVVKYSRLEDVLHGCSWKINNKLDGTYLPLPVDKIMQRTKNMINKIVQYSLIEGNCEHFVNDLRYGVPRSQQVEHALVEGAKAAGAVLSAVVDSIRPKPITA.

Disordered stretches follow at residues 1–54 and 70–122; these read MGLS…SASS and RRLE…NPRP. 2 stretches are compositionally biased toward polar residues: residues 24–54 and 100–116; these read TQIS…SASS and IPTS…NQAV. The region spanning 127–240 is the LRAT domain; sequence LIEIFRIGYE…LRYGVPRSQQ (114 aa). Residues His137 and His149 contribute to the active site. Residue Cys224 is the Acyl-thioester intermediate of the active site.

The protein belongs to the H-rev107 family. In terms of tissue distribution, isoform 4 shows highest expression level in testis.

It is found in the cytoplasm. The protein resides in the cytosol. The catalysed reaction is a 1,2-diacyl-sn-glycero-3-phosphocholine + H2O = a 1-acyl-sn-glycero-3-phosphocholine + a fatty acid + H(+). The enzyme catalyses a 1,2-diacyl-sn-glycero-3-phosphocholine + H2O = a 2-acyl-sn-glycero-3-phosphocholine + a fatty acid + H(+). It carries out the reaction 1-hexadecanoyl-2-(5Z,8Z,11Z,14Z-eicosatetraenoyl)-sn-glycero-3-phosphocholine + 1,2-di-(9Z-octadecenoyl)-sn-glycero-3-phosphoethanolamine = N-(5Z,8Z,11Z,14Z-eicosatetraenoyl)-1,2-di-(9Z-octadecenoyl)-sn-glycero-3-phosphoethanolamine + 1-hexadecanoyl-sn-glycero-3-phosphocholine + H(+). It catalyses the reaction 1,2-di-(9Z-octadecenoyl)-sn-glycero-3-phosphoethanolamine + 1,2-dihexadecanoyl-sn-glycero-3-phosphocholine = N-hexadecanoyl-1,2-di-(9Z-octadecenoyl)-sn-glycero-3-phosphoethanolamine + 1-hexadecanoyl-sn-glycero-3-phosphocholine + H(+). The catalysed reaction is 1,2-di-(9Z-octadecenoyl)-sn-glycero-3-phosphoethanolamine + 1,2-dihexadecanoyl-sn-glycero-3-phosphocholine = N-hexadecanoyl-1,2-di-(9Z-octadecenoyl)-sn-glycero-3-phosphoethanolamine + 2-hexadecanoyl-sn-glycero-3-phosphocholine + H(+). The enzyme catalyses a 1,2-diacyl-sn-glycero-3-phosphoethanolamine + a 1,2-diacyl-sn-glycero-3-phosphocholine = an N-acyl-1,2-diacyl-sn-glycero-3-phosphoethanolamine + a 1-acyl-sn-glycero-3-phosphocholine + H(+). It carries out the reaction a 1,2-diacyl-sn-glycero-3-phosphoethanolamine + a 1,2-diacyl-sn-glycero-3-phosphocholine = an N-acyl-1,2-diacyl-sn-glycero-3-phosphoethanolamine + a 2-acyl-sn-glycero-3-phosphocholine + H(+). It catalyses the reaction 1-hexadecanoyl-2-(9Z-octadecenoyl)-sn-glycero-3-phosphocholine + 1,2-di-(9Z-octadecenoyl)-sn-glycero-3-phosphoethanolamine = N,1,2-tri-(9Z-octadecenoyl)-sn-glycero-3-phosphoethanolamine + 1-hexadecanoyl-sn-glycero-3-phosphocholine + H(+). In terms of biological role, exhibits both phospholipase A1/2 and acyltransferase activities. Shows phospholipase A1 (PLA1) and A2 (PLA2) activity, catalyzing the calcium-independent release of fatty acids from the sn-1 or sn-2 position of glycerophospholipids. Shows N-acyltransferase activity, catalyzing the calcium-independent transfer of a fatty acyl group at the sn-1 position of phosphatidylcholine (PC) and other glycerophospholipids to the primary amine of phosphatidylethanolamine (PE), forming N-acylphosphatidylethanolamine (NAPE), which serves as precursor for N-acylethanolamines (NAEs). This is Phospholipase A and acyltransferase 5 from Mus musculus (Mouse).